The chain runs to 74 residues: VQVVVLALVAQVTLSQHWSYGWLPGGKRSVGELEATIKMMDTGGVVVLPEETSAHVSERLRPYDVILKKWMPHK.

The N-terminal stretch at 1–15 (VQVVVLALVAQVTLS) is a signal peptide. The residue at position 16 (glutamine 16) is a Pyrrolidone carboxylic acid. Glycine 25 bears the Glycine amide mark.

The protein belongs to the GnRH family.

Its subcellular location is the secreted. Stimulates the secretion of gonadotropins. The chain is Progonadoliberin-3 (gnrh3) from Oncorhynchus mykiss (Rainbow trout).